Here is a 101-residue protein sequence, read N- to C-terminus: Cysteine-rich PDZ-binding protein (101 aa).

It belongs to the CRIPT family. As to quaternary structure, component of the minor spliceosome, which splices U12-type introns.

The protein resides in the cytoplasm. As a component of the minor spliceosome, involved in the splicing of U12-type introns in pre-mRNAs. The chain is Cysteine-rich PDZ-binding protein (CRIPT) from Gallus gallus (Chicken).